A 228-amino-acid chain; its full sequence is Uracil-DNA glycosylase (228 aa).

Residue aspartate 71 is the Proton acceptor of the active site.

It belongs to the uracil-DNA glycosylase (UDG) superfamily. UNG family.

The protein localises to the cytoplasm. The catalysed reaction is Hydrolyzes single-stranded DNA or mismatched double-stranded DNA and polynucleotides, releasing free uracil.. Its function is as follows. Excises uracil residues from the DNA which can arise as a result of misincorporation of dUMP residues by DNA polymerase or due to deamination of cytosine. This is Uracil-DNA glycosylase from Thermobifida fusca (strain YX).